The chain runs to 165 residues: Transcription elongation factor GreA (165 aa).

Residues Ala55–Lys78 adopt a coiled-coil conformation.

This sequence belongs to the GreA/GreB family.

Functionally, necessary for efficient RNA polymerase transcription elongation past template-encoded arresting sites. The arresting sites in DNA have the property of trapping a certain fraction of elongating RNA polymerases that pass through, resulting in locked ternary complexes. Cleavage of the nascent transcript by cleavage factors such as GreA or GreB allows the resumption of elongation from the new 3'terminus. GreA releases sequences of 2 to 3 nucleotides. The polypeptide is Transcription elongation factor GreA (Streptomyces coelicolor (strain ATCC BAA-471 / A3(2) / M145)).